A 455-amino-acid chain; its full sequence is tRNA modification GTPase MnmE (455 aa).

The (6S)-5-formyl-5,6,7,8-tetrahydrofolate site is built by R22, E85, and R124. One can recognise a TrmE-type G domain in the interval 220-377 (GIYTVIVGRP…VEKAIKEAIL (158 aa)). N230 serves as a coordination point for K(+). GTP is bound by residues 230–235 (NVGKSS), 249–255 (TDIPGTT), and 274–277 (DTAG). S234 is a binding site for Mg(2+). K(+) contacts are provided by T249, I251, and T254. Mg(2+) is bound at residue T255. K455 serves as a coordination point for (6S)-5-formyl-5,6,7,8-tetrahydrofolate.

Belongs to the TRAFAC class TrmE-Era-EngA-EngB-Septin-like GTPase superfamily. TrmE GTPase family. In terms of assembly, homodimer. Heterotetramer of two MnmE and two MnmG subunits. The cofactor is K(+).

The protein resides in the cytoplasm. Exhibits a very high intrinsic GTPase hydrolysis rate. Involved in the addition of a carboxymethylaminomethyl (cmnm) group at the wobble position (U34) of certain tRNAs, forming tRNA-cmnm(5)s(2)U34. The protein is tRNA modification GTPase MnmE of Caldicellulosiruptor saccharolyticus (strain ATCC 43494 / DSM 8903 / Tp8T 6331).